The sequence spans 108 residues: DNA-directed RNA polymerase III subunit RPC10 (108 aa).

Residues Cys-5, Cys-8, Cys-25, Cys-28, Cys-69, and Cys-72 each contribute to the Zn(2+) site. The C4-type zinc finger occupies 5–28 (CPGCGNGLIVEEGQRCHRFACNTC). A TFIIS-type zinc finger spans residues 65–107 (TAESCPKCEHPRAYFMQLQTRSADEPMTTFYKCCNAQCGHRWR). The short motif at 88 to 89 (DE) is the Hairpin element. Residues Cys-98 and Cys-102 each coordinate Zn(2+).

The protein belongs to the archaeal RpoM/eukaryotic RPA12/RPB9/RPC11 RNA polymerase family. Component of the RNA polymerase III complex consisting of 17 subunits: a ten-subunit horseshoe-shaped catalytic core composed of POLR3A/RPC1, POLR3B/RPC2, POLR1C/RPAC1, POLR1D/RPAC2, POLR3K/RPC10, POLR2E/RPABC1, POLR2F/RPABC2, POLR2H/RPABC3, POLR2K/RPABC4 and POLR2L/RPABC5; a mobile stalk composed of two subunits POLR3H/RPC8 and CRCP/RPC9, protruding from the core and functioning primarily in transcription initiation; and additional subunits homologous to general transcription factors of the RNA polymerase II machinery, POLR3C/RPC3-POLR3F/RPC6-POLR3G/RPC7 heterotrimer required for transcription initiation and POLR3D/RPC4-POLR3E/RPC5 heterodimer involved in both transcription initiation and termination.

The protein resides in the nucleus. Its function is as follows. Core component of RNA polymerase III (Pol III) which synthesizes small non-coding RNAs using the four ribonucleoside triphosphates as substrates. Can mediate Pol I proofreading of the nascent RNA transcript. Anchors into the Pol III active site to constantly monitor transcription fidelity, cleaves mis-incorporated 5'-ribonucleotides and restarts the transcription process. Once Pol III reaches the poly(dT) termination signal, can induce Pol III clamp opening and transcription termination. Pol III plays an important role in sensing and limiting infection by intracellular bacteria and DNA viruses. Acts as a nuclear and cytosolic DNA sensor involved in innate immune response. Can sense non-self dsDNA that serves as template for transcription into dsRNA. The non-self RNA polymerase III transcripts, such as Epstein-Barr virus-encoded RNAs (EBERs) induce type I interferon and NF-kappa-B through the RIG-I pathway. This is DNA-directed RNA polymerase III subunit RPC10 from Homo sapiens (Human).